A 232-amino-acid chain; its full sequence is Flagellar L-ring protein (232 aa).

The signal sequence occupies residues 1-21 (MQKNAAHTYAISSLLVLSLTG). Cys-22 carries the N-palmitoyl cysteine lipid modification. A lipid anchor (S-diacylglycerol cysteine) is attached at Cys-22.

Belongs to the FlgH family. The basal body constitutes a major portion of the flagellar organelle and consists of four rings (L,P,S, and M) mounted on a central rod.

The protein localises to the cell outer membrane. It is found in the bacterial flagellum basal body. Functionally, assembles around the rod to form the L-ring and probably protects the motor/basal body from shearing forces during rotation. This chain is Flagellar L-ring protein, found in Shigella boydii serotype 18 (strain CDC 3083-94 / BS512).